The chain runs to 547 residues: Malolactic enzyme (547 aa).

Catalysis depends on Tyr-92, which acts as the Proton donor. Lys-165 acts as the Proton acceptor in catalysis. A substrate-binding site is contributed by Lys-165. 3 residues coordinate Mn(2+): Glu-236, Asp-237, and Asp-260. NAD(+)-binding positions include 293 to 296 (AGTA), Asn-405, and Asn-450. Asn-450 contributes to the substrate binding site.

Belongs to the malic enzymes family. Homodimer. It depends on Mn(2+) as a cofactor. Requires NAD(+) as cofactor.

It catalyses the reaction (S)-malate + H(+) = (S)-lactate + CO2. Its function is as follows. Involved in the malolactic fermentation (MLF) of wine, which results in a natural decrease in acidity and favorable changes in wine flavors. Catalyzes the decarboxylation of L-malate to L-lactate. This is Malolactic enzyme from Lactiplantibacillus plantarum (strain ATCC BAA-793 / NCIMB 8826 / WCFS1) (Lactobacillus plantarum).